The chain runs to 135 residues: Nitrogen fixation protein NifU 1 (135 aa).

Residues 1 to 10 are compositionally biased toward basic and acidic residues; that stretch reads MRDMQDDDTK. Residues 1-29 form a disordered region; the sequence is MRDMQDDDTKSPAPPPAAAAAARRAAGQA. Over residues 18–29 the composition is skewed to low complexity; the sequence is AAAAARRAAGQA.

The protein belongs to the NifU family.

Functionally, may be involved in the formation or repair of [Fe-S] clusters present in iron-sulfur proteins. The polypeptide is Nitrogen fixation protein NifU 1 (nifU1) (Rhodobacter capsulatus (Rhodopseudomonas capsulata)).